We begin with the raw amino-acid sequence, 806 residues long: Leucine--tRNA ligase (806 aa).

Positions 40–51 (PYPSGKGLHVGH) match the 'HIGH' region motif. The 'KMSKS' region signature appears at 580–584 (KMSKS). Lys583 is a binding site for ATP.

This sequence belongs to the class-I aminoacyl-tRNA synthetase family.

The protein resides in the cytoplasm. The enzyme catalyses tRNA(Leu) + L-leucine + ATP = L-leucyl-tRNA(Leu) + AMP + diphosphate. This chain is Leucine--tRNA ligase, found in Ureaplasma urealyticum serovar 10 (strain ATCC 33699 / Western).